The chain runs to 515 residues: 2-isopropylmalate synthase (515 aa).

In terms of domain architecture, Pyruvate carboxyltransferase spans 4–266; sequence IKFFDTTLRD…ETRLNLQEIK (263 aa). Aspartate 13, histidine 201, histidine 203, and asparagine 237 together coordinate Mn(2+). The tract at residues 391-515 is regulatory domain; the sequence is QLSSIQVQYG…RAENEKVATS (125 aa).

It belongs to the alpha-IPM synthase/homocitrate synthase family. LeuA type 1 subfamily. Homodimer. It depends on Mn(2+) as a cofactor.

The protein localises to the cytoplasm. The catalysed reaction is 3-methyl-2-oxobutanoate + acetyl-CoA + H2O = (2S)-2-isopropylmalate + CoA + H(+). The protein operates within amino-acid biosynthesis; L-leucine biosynthesis; L-leucine from 3-methyl-2-oxobutanoate: step 1/4. In terms of biological role, catalyzes the condensation of the acetyl group of acetyl-CoA with 3-methyl-2-oxobutanoate (2-ketoisovalerate) to form 3-carboxy-3-hydroxy-4-methylpentanoate (2-isopropylmalate). The protein is 2-isopropylmalate synthase of Geobacillus stearothermophilus (Bacillus stearothermophilus).